A 1065-amino-acid polypeptide reads, in one-letter code: Carbamoyl phosphate synthase large chain (1065 aa).

Residues 1 to 401 form a carboxyphosphate synthetic domain region; sequence MPKRTDIETI…AMLKAVRSLE (401 aa). Residues Arg-129, Arg-169, Gly-175, Gly-176, Lys-208, Ile-210, Glu-215, Gly-241, Ile-242, His-243, Gln-284, and Glu-298 each contribute to the ATP site. The region spanning 133 to 327 is the ATP-grasp 1 domain; the sequence is RNLMYELGAP…IAKLAAKIAV (195 aa). 3 residues coordinate Mg(2+): Gln-284, Glu-298, and Asn-300. The Mn(2+) site is built by Gln-284, Glu-298, and Asn-300. The segment at 402-546 is oligomerization domain; sequence TGQVHLELKH…YGTYEEENES (145 aa). Residues 547–929 form a carbamoyl phosphate synthetic domain region; that stretch reads IKSEKPSVVV…ALYKGLVAAG (383 aa). One can recognise an ATP-grasp 2 domain in the interval 671–861; the sequence is EQALRDLNIP…MANIATKAIL (191 aa). ATP contacts are provided by Arg-707, Arg-746, Leu-748, Glu-752, Gly-777, Val-778, His-779, Ser-780, Gln-820, and Glu-832. Mg(2+) is bound by residues Gln-820, Glu-832, and Asn-834. Residues Gln-820, Glu-832, and Asn-834 each contribute to the Mn(2+) site. The region spanning 930 to 1065 is the MGS-like domain; the sequence is MEIRTEGTVL…EEMPKAEVVH (136 aa). An allosteric domain region spans residues 930–1065; it reads MEIRTEGTVL…EEMPKAEVVH (136 aa).

It belongs to the CarB family. In terms of assembly, composed of two chains; the small (or glutamine) chain promotes the hydrolysis of glutamine to ammonia, which is used by the large (or ammonia) chain to synthesize carbamoyl phosphate. Tetramer of heterodimers (alpha,beta)4. Mg(2+) serves as cofactor. Mn(2+) is required as a cofactor.

It catalyses the reaction hydrogencarbonate + L-glutamine + 2 ATP + H2O = carbamoyl phosphate + L-glutamate + 2 ADP + phosphate + 2 H(+). The catalysed reaction is hydrogencarbonate + NH4(+) + 2 ATP = carbamoyl phosphate + 2 ADP + phosphate + 2 H(+). It functions in the pathway amino-acid biosynthesis; L-arginine biosynthesis; carbamoyl phosphate from bicarbonate: step 1/1. The protein operates within pyrimidine metabolism; UMP biosynthesis via de novo pathway; (S)-dihydroorotate from bicarbonate: step 1/3. Large subunit of the glutamine-dependent carbamoyl phosphate synthetase (CPSase). CPSase catalyzes the formation of carbamoyl phosphate from the ammonia moiety of glutamine, carbonate, and phosphate donated by ATP, constituting the first step of 2 biosynthetic pathways, one leading to arginine and/or urea and the other to pyrimidine nucleotides. The large subunit (synthetase) binds the substrates ammonia (free or transferred from glutamine from the small subunit), hydrogencarbonate and ATP and carries out an ATP-coupled ligase reaction, activating hydrogencarbonate by forming carboxy phosphate which reacts with ammonia to form carbamoyl phosphate. The polypeptide is Carbamoyl phosphate synthase large chain (Lysinibacillus sphaericus (strain C3-41)).